We begin with the raw amino-acid sequence, 380 residues long: Cytochrome b (380 aa).

Transmembrane regions (helical) follow at residues 34–54, 78–99, 114–134, and 179–199; these read FGSL…LLAM, WLIR…YLHI, WNTG…GYVL, and FFAL…IHLT. Heme b contacts are provided by His-84 and His-98. His-183 and His-197 together coordinate heme b. Position 202 (His-202) interacts with a ubiquinone. Helical transmembrane passes span 227-247, 289-309, 321-341, and 348-368; these read SKDI…ALLS, LGGV…PFLH, LSQA…WIGS, and FIII…ILLP.

It belongs to the cytochrome b family. As to quaternary structure, the cytochrome bc1 complex contains 11 subunits: 3 respiratory subunits (MT-CYB, CYC1 and UQCRFS1), 2 core proteins (UQCRC1 and UQCRC2) and 6 low-molecular weight proteins (UQCRH/QCR6, UQCRB/QCR7, UQCRQ/QCR8, UQCR10/QCR9, UQCR11/QCR10 and a cleavage product of UQCRFS1). This cytochrome bc1 complex then forms a dimer. Heme b serves as cofactor.

It localises to the mitochondrion inner membrane. Its function is as follows. Component of the ubiquinol-cytochrome c reductase complex (complex III or cytochrome b-c1 complex) that is part of the mitochondrial respiratory chain. The b-c1 complex mediates electron transfer from ubiquinol to cytochrome c. Contributes to the generation of a proton gradient across the mitochondrial membrane that is then used for ATP synthesis. This is Cytochrome b (MT-CYB) from Phalcoboenus australis (Striated caracara).